We begin with the raw amino-acid sequence, 99 residues long: Large ribosomal subunit protein bL21 (99 aa).

Belongs to the bacterial ribosomal protein bL21 family. Part of the 50S ribosomal subunit. Contacts protein L20.

This protein binds to 23S rRNA in the presence of protein L20. The sequence is that of Large ribosomal subunit protein bL21 from Mesomycoplasma hyopneumoniae (strain 7448) (Mycoplasma hyopneumoniae).